A 485-amino-acid polypeptide reads, in one-letter code: MLKEYNSLIFELSKEGKKAYTLPPLDVEEKPLEDMLPKEMLREKEVDLPEVSEVDVIRHYTLLSQKNYGVDIGFYPLGSCTMKYNPKINEDMASLPGFTELHPYQPEETVQGALKLMYELEKALCEITGMDRFSLHPAAGAHGELTGLMIIKAYHEHRNDKKRKKIIVPDSAHGTNPASAAVAGFDVIEIKSNKEGAIDLEALKAVLNDEVAGLMLTNPSTLGLFEENIVEIARLVHEAGGLLYYDGANLNAIMGISRPGDMGFDVVHLNLHKTFSTPHGGGGPGSGPVGVKKELADFLPVPTVEEKDGRYFLDYDRPLSIGKVRSFYGNFNVMIKAYSYILTMGAEGLKRASELAVLNANYLKEKLKGYYKVAVDKTCMHEFVLAGLAEKSGDVRTLDVAKRLIDYGFHPPTIYFPLIVEEALMIEPTETETKETLDAFAETLIKIAKEAKENPELLKEAPHNTPVRRLDEVLAARNPVIRWTK.

An N6-(pyridoxal phosphate)lysine modification is found at Lys-273.

Belongs to the GcvP family. C-terminal subunit subfamily. In terms of assembly, the glycine cleavage system is composed of four proteins: P, T, L and H. In this organism, the P 'protein' is a heterodimer of two subunits. Pyridoxal 5'-phosphate is required as a cofactor.

The catalysed reaction is N(6)-[(R)-lipoyl]-L-lysyl-[glycine-cleavage complex H protein] + glycine + H(+) = N(6)-[(R)-S(8)-aminomethyldihydrolipoyl]-L-lysyl-[glycine-cleavage complex H protein] + CO2. Functionally, the glycine cleavage system catalyzes the degradation of glycine. The P protein binds the alpha-amino group of glycine through its pyridoxal phosphate cofactor; CO(2) is released and the remaining methylamine moiety is then transferred to the lipoamide cofactor of the H protein. In Caldanaerobacter subterraneus subsp. tengcongensis (strain DSM 15242 / JCM 11007 / NBRC 100824 / MB4) (Thermoanaerobacter tengcongensis), this protein is Probable glycine dehydrogenase (decarboxylating) subunit 2.